Here is a 1342-residue protein sequence, read N- to C-terminus: DNA-directed RNA polymerase subunit beta (1342 aa).

Belongs to the RNA polymerase beta chain family. In terms of assembly, the RNAP catalytic core consists of 2 alpha, 1 beta, 1 beta' and 1 omega subunit. When a sigma factor is associated with the core the holoenzyme is formed, which can initiate transcription.

It carries out the reaction RNA(n) + a ribonucleoside 5'-triphosphate = RNA(n+1) + diphosphate. DNA-dependent RNA polymerase catalyzes the transcription of DNA into RNA using the four ribonucleoside triphosphates as substrates. The protein is DNA-directed RNA polymerase subunit beta of Aliivibrio fischeri (strain ATCC 700601 / ES114) (Vibrio fischeri).